Here is a 141-residue protein sequence, read N- to C-terminus: Putative antiporter subunit mnhB2 (141 aa).

4 consecutive transmembrane segments (helical) span residues 10 to 30, 35 to 55, 70 to 90, and 116 to 136; these read TVTK…FLAG, GGGF…FLAF, ILMI…MFFG, and VFEA…MLSI.

The protein belongs to the CPA3 antiporters (TC 2.A.63) subunit B family. In terms of assembly, may form a heterooligomeric complex that consists of seven subunits: mnhA2, mnhB2, mnhC2, mnhD2, mnhE2, mnhF2 and mnhG2.

Its subcellular location is the cell membrane. This chain is Putative antiporter subunit mnhB2 (mnhB2), found in Staphylococcus saprophyticus subsp. saprophyticus (strain ATCC 15305 / DSM 20229 / NCIMB 8711 / NCTC 7292 / S-41).